A 283-amino-acid chain; its full sequence is UPF0273 protein STK_18300 (283 aa).

Residues 4–249 (LRVRTYIPGF…YLRITNVKAE (246 aa)) form the KaiC domain. 31–38 (GGPGTGKS) lines the ATP pocket. The tract at residues 261–283 (MKKAVEESEEEKESIQEAEIEEE) is disordered. A compositionally biased stretch (acidic residues) spans 267 to 283 (ESEEEKESIQEAEIEEE).

The protein belongs to the UPF0273 family.

This Sulfurisphaera tokodaii (strain DSM 16993 / JCM 10545 / NBRC 100140 / 7) (Sulfolobus tokodaii) protein is UPF0273 protein STK_18300.